The chain runs to 349 residues: Hydroxymethylglutaryl-CoA synthase (349 aa).

(3S)-3-hydroxy-3-methylglutaryl-CoA contacts are provided by Asp30 and Ala31. Glu82 serves as the catalytic Proton donor/acceptor. Residues Cys114 and Thr155 each contribute to the (3S)-3-hydroxy-3-methylglutaryl-CoA site. Residue Cys114 is the Acyl-thioester intermediate of the active site. Arg203 is a CoA binding site. Thr205 and His238 together coordinate (3S)-3-hydroxy-3-methylglutaryl-CoA. The active-site Proton donor/acceptor is the His238. A CoA-binding site is contributed by Lys243. 2 residues coordinate (3S)-3-hydroxy-3-methylglutaryl-CoA: Asn270 and Ser300.

The protein belongs to the thiolase-like superfamily. Archaeal HMG-CoA synthase family. As to quaternary structure, interacts with acetoacetyl-CoA thiolase that catalyzes the precedent step in the pathway and with a DUF35 protein. The acetoacetyl-CoA thiolase/HMG-CoA synthase complex channels the intermediate via a fused CoA-binding site, which allows for efficient coupling of the endergonic thiolase reaction with the exergonic HMGCS reaction.

The catalysed reaction is acetoacetyl-CoA + acetyl-CoA + H2O = (3S)-3-hydroxy-3-methylglutaryl-CoA + CoA + H(+). It participates in metabolic intermediate biosynthesis; (R)-mevalonate biosynthesis; (R)-mevalonate from acetyl-CoA: step 2/3. Its function is as follows. Catalyzes the condensation of acetyl-CoA with acetoacetyl-CoA to form 3-hydroxy-3-methylglutaryl-CoA (HMG-CoA). Functions in the mevalonate (MVA) pathway leading to isopentenyl diphosphate (IPP), a key precursor for the biosynthesis of isoprenoid compounds that are building blocks of archaeal membrane lipids. This is Hydroxymethylglutaryl-CoA synthase from Methanococcus maripaludis (strain DSM 14266 / JCM 13030 / NBRC 101832 / S2 / LL).